The following is a 1033-amino-acid chain: Complement receptor type 2 (1033 aa).

A signal peptide spans 1-20 (MGAAGLLGVFLALVAPGVLG). 15 Sushi domains span residues 21–84 (ISCG…KCEY), 89–148 (SSCP…TCVS), 152–212 (LECP…TCEE), 213–273 (ARCK…VCEE), 274–344 (IFCP…RCEL), 349–408 (VQCP…VCEK), 409–468 (ECQA…QCKV), 469–524 (AACE…LCKE), 525–595 (ITCP…LCKL), 600–659 (VQCS…VCEK), 660–716 (ETCQ…LCKV), 717–781 (IHCH…QCLR), 786–845 (TRCP…TCIK), 849–909 (IGCP…HCKE), and 910–970 (VNCS…VCRS). The Extracellular portion of the chain corresponds to 21 to 971 (ISCGSPPPIL…NPPLAVCRSR (951 aa)). 28 disulfides stabilise this stretch: C23-C65, C51-C82, C91-C132, C118-C146, C154-C197, C183-C210, C215-C256, C242-C271, C276-C325, C305-C342, C351-C393, C379-C406, C410-C453, C439-C466, C471-C509, C495-C522, C527-C576, C556-C593, C602-C644, C630-C657, C662-C699, C685-C714, C719-C762, C748-C779, C788-C830, C816-C843, C851-C894, and C880-C907. N121 and N127 each carry an N-linked (GlcNAc...) asparagine glycan. N294 carries an N-linked (GlcNAc...) asparagine glycan. The N-linked (GlcNAc...) asparagine glycan is linked to N372. N492 carries an N-linked (GlcNAc...) asparagine glycan. A glycan (N-linked (GlcNAc...) asparagine) is linked at N623. N682 carries N-linked (GlcNAc...) asparagine glycosylation. 3 N-linked (GlcNAc...) asparagine glycosylation sites follow: N800, N823, and N861. The N-linked (GlcNAc...) asparagine glycan is linked to N911. Cystine bridges form between C912–C955 and C941–C968. A helical transmembrane segment spans residues 972-999 (SLAPVLCGIAAGLILLTFLIVITLYVIS). Residues 1000-1033 (KHRARNYYTDTSQKEAFHLEAREVYSVDPYNPAS) lie on the Cytoplasmic side of the membrane.

It belongs to the receptors of complement activation (RCA) family. In terms of assembly, interacts (via Sushi domain 1 and 2) with C3. Interacts with CD19. Part of a complex composed of CD19, CR2/CD21, CD81 and IFITM1/CD225 in the membrane of mature B-cells. Interacts (via Sushi domain 1 and 2) with FCER2 (via the C-terminus). Interacts with CD23. Interacts with FCRL5. Interacts with CR1. Interacts with INFNA1. (Microbial infection) Interacts with Epstein-Barr virus gp350 protein. As to expression, mature B-lymphocytes, T-lymphocytes, pharyngeal epithelial cells, astrocytes and follicular dendritic cells of the spleen.

It localises to the cell membrane. Its function is as follows. Serves as a receptor for various ligands including complement component CD3d, HNRNPU OR IFNA1. When C3d is bound to antigens, attaches to C3d on B-cell surface and thereby facilitates the recognition and uptake of antigens by B-cells. This interaction enhances B-cell activation and subsequent immune responses. Forms a complex with several partners on the surface of B-cells including CD19, FCRL5 and CD81, to form the B-cell coreceptor complex that plays a crucial role in B-cell activation and signaling. Also induces specific intracellular signaling separately from the BCR and CD19 by activating the tyrosine kinase SRC, which then phosphorylates nucleolin/NCL and triggers AKT and GSK3 kinase activities in a SYK/CD19-independent manner. Acts as a ligand for CD23 (FcepsilonRII), a low-affinity receptor for IgE, which is expressed on B-cells and other immune cells, and thus participates in the regulation of IgE production. (Microbial infection) Acts as a receptor for Epstein-Barr virus. This Homo sapiens (Human) protein is Complement receptor type 2 (CR2).